Reading from the N-terminus, the 195-residue chain is MATASFNMQSVFAGGLTTRKINTNKLFSAGSFPNLKRNYPVGVRCMAEGGPTNEDSSPAPSTSAAQPLPKSPSPPPPMKPKVSTKFSDLLAFSGPAPERINGRLAMVGFVAALAVELSKGENVLAQISDGGVSWFLGTTAILTLASLVPLFKGISVESKSKGIMTSDAELWNGRFAMLGLVALAFTEFVKGGTLV.

Residues 1-46 (MATASFNMQSVFAGGLTTRKINTNKLFSAGSFPNLKRNYPVGVRCM) constitute a chloroplast transit peptide. Residues 46-81 (MAEGGPTNEDSSPAPSTSAAQPLPKSPSPPPPMKPK) are disordered. Over residues 56-68 (SSPAPSTSAAQPL) the composition is skewed to low complexity. A compositionally biased stretch (pro residues) spans 69 to 79 (PKSPSPPPPMK). 3 helical membrane passes run 104–124 (LAMVGFVAALAVELSKGENVL), 131–151 (GVSWFLGTTAILTLASLVPLF), and 175–195 (FAMLGLVALAFTEFVKGGTLV).

This sequence belongs to the ELIP/psbS family.

It localises to the plastid. The protein localises to the chloroplast thylakoid membrane. In terms of biological role, prevents excess accumulation of free chlorophyll by inhibiting the entire chlorophyll biosynthesis pathway (e.g. 5-aminolevulinate synthesis and Mg-protoporphyrin IX chelatase activity), and hence prevent photooxidative stress. Probably involved in the integration of pigments into the mature light-harvesting pigment-protein complexes. Light-harvesting chlorophyll (LHC) a/b-binding protein required to ensure a high rate of chlorophyll accumulation during deetiolation in continuous high light. Involved in seed germination. May fulfill a photoprotective functions. The chain is Early light-induced protein 1, chloroplastic from Arabidopsis thaliana (Mouse-ear cress).